Here is a 620-residue protein sequence, read N- to C-terminus: Chaperone protein HscA homolog (620 aa).

Belongs to the heat shock protein 70 family.

In terms of biological role, chaperone involved in the maturation of iron-sulfur cluster-containing proteins. Has a low intrinsic ATPase activity which is markedly stimulated by HscB. This Pseudomonas syringae pv. tomato (strain ATCC BAA-871 / DC3000) protein is Chaperone protein HscA homolog.